A 445-amino-acid chain; its full sequence is Methionine aminopeptidase 2-2 (445 aa).

Residues 1 to 92 (MAAQASEDLK…RVPISQLFPN (92 aa)) are disordered. Low complexity predominate over residues 18 to 33 (AGDSKAAAATAGQAEA). A compositionally biased stretch (acidic residues) spans 34-46 (GEAEDDSDDDEVD). Residues 47–58 (GNAAPEGAASGA) show a composition bias toward low complexity. The span at 59–74 (AKKKKKRKPKKKKKGG) shows a compositional bias: basic residues. Residue histidine 198 coordinates substrate. The a divalent metal cation site is built by aspartate 218, aspartate 229, and histidine 298. Histidine 306 serves as a coordination point for substrate. Residues glutamate 331 and glutamate 426 each coordinate a divalent metal cation.

The protein belongs to the peptidase M24A family. Methionine aminopeptidase eukaryotic type 2 subfamily. Requires Co(2+) as cofactor. The cofactor is Zn(2+). Mn(2+) serves as cofactor. It depends on Fe(2+) as a cofactor.

The protein localises to the cytoplasm. It carries out the reaction Release of N-terminal amino acids, preferentially methionine, from peptides and arylamides.. Cotranslationally removes the N-terminal methionine from nascent proteins. The N-terminal methionine is often cleaved when the second residue in the primary sequence is small and uncharged (Met-Ala-, Cys, Gly, Pro, Ser, Thr, or Val). The chain is Methionine aminopeptidase 2-2 from Aspergillus terreus (strain NIH 2624 / FGSC A1156).